A 155-amino-acid polypeptide reads, in one-letter code: Protein-export protein SecB 1 (155 aa).

The protein belongs to the SecB family. In terms of assembly, homotetramer, a dimer of dimers. One homotetramer interacts with 1 SecA dimer.

The protein resides in the cytoplasm. Functionally, one of the proteins required for the normal export of preproteins out of the cell cytoplasm. It is a molecular chaperone that binds to a subset of precursor proteins, maintaining them in a translocation-competent state. It also specifically binds to its receptor SecA. This chain is Protein-export protein SecB 1, found in Polaromonas naphthalenivorans (strain CJ2).